Reading from the N-terminus, the 399-residue chain is MAREKFERNKPHVNIGTIGHVDHGKTTLTAAITNVLAKKGQAQAQDYGDIDGAPEERERGITINTAHVEYETDGRHYAHVDCPGHADYVKNMITGAAQMDGAIIVVAATDGAMAQTKEHILLAKQVGVPSLVVALNKCDMVDDAEMIELVEMEIRELLSSYDFPGDDIPVIQVSALKALEGDSEWEGKIDELMKSVDESIPEPEREVDKPFLMAVEDVFSITGRGTVATGRIERGKIKVGEEVEIVGIKDTRVTTVTGVEMFRKLLDEGMAGDNVGLLLRGVQKEDIERGMVLVKKGSITPHTKFEGEVYVLKKEEGGRHTPFFAGYRPQFYIRTTDVTGQITAFTADDGSNVEMVMPGDRIKMTGELICPVAIEQGMRFAIREGGRTIGAGVVSKIIK.

Residues lysine 10–glutamate 204 enclose the tr-type G domain. The segment at glycine 19–threonine 26 is G1. Glycine 19–threonine 26 is a binding site for GTP. Threonine 26 contacts Mg(2+). A G2 region spans residues glycine 60–asparagine 64. Positions aspartate 81–glycine 84 are G3. GTP contacts are provided by residues aspartate 81–histidine 85 and asparagine 136–aspartate 139. The G4 stretch occupies residues asparagine 136–aspartate 139. The interval serine 174 to leucine 176 is G5.

This sequence belongs to the TRAFAC class translation factor GTPase superfamily. Classic translation factor GTPase family. EF-Tu/EF-1A subfamily. In terms of assembly, monomer.

The protein resides in the cytoplasm. The catalysed reaction is GTP + H2O = GDP + phosphate + H(+). Functionally, GTP hydrolase that promotes the GTP-dependent binding of aminoacyl-tRNA to the A-site of ribosomes during protein biosynthesis. In Prochlorococcus marinus (strain MIT 9211), this protein is Elongation factor Tu.